Consider the following 193-residue polypeptide: Dephospho-CoA kinase (193 aa).

The 189-residue stretch at 5 to 193 folds into the DPCK domain; it reads IIGLTGGIAS…KKVERFCETI (189 aa). 13 to 18 is an ATP binding site; the sequence is ASGKST.

It belongs to the CoaE family.

The protein resides in the cytoplasm. It carries out the reaction 3'-dephospho-CoA + ATP = ADP + CoA + H(+). It functions in the pathway cofactor biosynthesis; coenzyme A biosynthesis; CoA from (R)-pantothenate: step 5/5. Catalyzes the phosphorylation of the 3'-hydroxyl group of dephosphocoenzyme A to form coenzyme A. This chain is Dephospho-CoA kinase, found in Fusobacterium nucleatum subsp. nucleatum (strain ATCC 25586 / DSM 15643 / BCRC 10681 / CIP 101130 / JCM 8532 / KCTC 2640 / LMG 13131 / VPI 4355).